The following is a 732-amino-acid chain: Catalase-peroxidase (732 aa).

The segment at 1 to 21 (MSMAEMRCPFSGHGAATTPAS) is disordered. The signal sequence occupies residues 1 to 22 (MSMAEMRCPFSGHGAATTPASA). Residues 97 to 220 (WHSAGTYRLA…LAATEMGLIY (124 aa)) constitute a cross-link (tryptophyl-tyrosyl-methioninium (Trp-Tyr) (with M-246)). Residue His98 is the Proton acceptor of the active site. The segment at residues 220–246 (YVNPEGPHGEPDPVASGREVRDTFARM) is a cross-link (tryptophyl-tyrosyl-methioninium (Tyr-Met) (with W-97)). A heme b-binding site is contributed by His261.

Belongs to the peroxidase family. Peroxidase/catalase subfamily. As to quaternary structure, homodimer or homotetramer. Requires heme b as cofactor. Post-translationally, formation of the three residue Trp-Tyr-Met cross-link is important for the catalase, but not the peroxidase activity of the enzyme.

The enzyme catalyses H2O2 + AH2 = A + 2 H2O. It catalyses the reaction 2 H2O2 = O2 + 2 H2O. Bifunctional enzyme with both catalase and broad-spectrum peroxidase activity. The polypeptide is Catalase-peroxidase (Synechococcus sp. (strain RCC307)).